The following is a 476-amino-acid chain: Zinc finger protein 563 (476 aa).

One can recognise a KRAB domain in the interval 4–96 (VAFEDVAVNF…IRDSIVNNSI (93 aa)). A C2H2-type 1; degenerate zinc finger spans residues 101-125 (DPCQSAECEEVIMGHLSLNSHIRVD). The C2H2-type 2; degenerate zinc finger occupies 169–191 (YECKECGKTFSSRRNLRRHMVVQ). 10 C2H2-type zinc fingers span residues 197–219 (YKCK…ERTH), 225–247 (YECK…ERMH), 253–275 (YECK…ERTH), 281–303 (YTCK…ETTH), 309–331 (YECK…MKRH), 337–359 (HKCK…ERIH), 365–387 (YECK…MIMH), 393–415 (HKCK…EKSH), 421–443 (YECK…MVMH), and 449–471 (NKCK…EKTH).

It belongs to the krueppel C2H2-type zinc-finger protein family.

The protein localises to the nucleus. In terms of biological role, may be involved in transcriptional regulation. The protein is Zinc finger protein 563 (ZNF563) of Homo sapiens (Human).